A 536-amino-acid chain; its full sequence is Bifunctional purine biosynthesis protein PurH (536 aa).

Residues 8 to 158 (IPAPDEVRIK…KNHAYVTVVT (151 aa)) enclose the MGS-like domain.

Belongs to the PurH family.

The catalysed reaction is (6R)-10-formyltetrahydrofolate + 5-amino-1-(5-phospho-beta-D-ribosyl)imidazole-4-carboxamide = 5-formamido-1-(5-phospho-D-ribosyl)imidazole-4-carboxamide + (6S)-5,6,7,8-tetrahydrofolate. It carries out the reaction IMP + H2O = 5-formamido-1-(5-phospho-D-ribosyl)imidazole-4-carboxamide. The protein operates within purine metabolism; IMP biosynthesis via de novo pathway; 5-formamido-1-(5-phospho-D-ribosyl)imidazole-4-carboxamide from 5-amino-1-(5-phospho-D-ribosyl)imidazole-4-carboxamide (10-formyl THF route): step 1/1. It functions in the pathway purine metabolism; IMP biosynthesis via de novo pathway; IMP from 5-formamido-1-(5-phospho-D-ribosyl)imidazole-4-carboxamide: step 1/1. In Sinorhizobium medicae (strain WSM419) (Ensifer medicae), this protein is Bifunctional purine biosynthesis protein PurH.